The primary structure comprises 337 residues: MAVKVGINGFGRIGRIVFRNAVEHPEIEVVAVNDPFIDPEYAAYMLKYDSSHGVFKGEIKKDADGLIVNGKKVKFHTERDPSAIPWKASGAEYIVESTGVFTTTEKAKAHLTGGAKKVIISAPSADAPMYVMGVNEKTYDGKADVISNASCTTNCLAPLAKVIHDKYTIVEGLMTTVHSYTATQKTVDGPSGKDWRGGRGAAQNIIPSSTGAAKAVGKVIPDLNGKLTGMSMRVPTPNVSVVDLTVRIEKGATYDEIKATVKEAANGSLAGILGYTEDDIVSSDMNGNTNSSIFDAKAGISLNKNFVKLIAWYDNEWGYSRRVLDLLAYVAKADASK.

NAD(+) contacts are provided by residues 12-13, D34, and R79; that span reads RI. Residues 150-152, T181, 210-211, and R233 each bind D-glyceraldehyde 3-phosphate; these read SCT and TG. The Nucleophile role is filled by C151. N315 serves as a coordination point for NAD(+).

It belongs to the glyceraldehyde-3-phosphate dehydrogenase family. In terms of assembly, homotetramer.

It is found in the cytoplasm. It catalyses the reaction D-glyceraldehyde 3-phosphate + phosphate + NAD(+) = (2R)-3-phospho-glyceroyl phosphate + NADH + H(+). It participates in carbohydrate degradation; glycolysis; pyruvate from D-glyceraldehyde 3-phosphate: step 1/5. The chain is Glyceraldehyde-3-phosphate dehydrogenase (GPD-1) from Claviceps purpurea (strain 20.1) (Ergot fungus).